The chain runs to 20 residues: Superoxide dismutase [Mn], mitochondrial (20 aa).

Belongs to the iron/manganese superoxide dismutase family. In terms of assembly, homotetramer. It depends on Mn(2+) as a cofactor.

The protein localises to the mitochondrion matrix. It catalyses the reaction 2 superoxide + 2 H(+) = H2O2 + O2. Functionally, destroys superoxide anion radicals which are normally produced within the cells and which are toxic to biological systems. This Hordeum vulgare (Barley) protein is Superoxide dismutase [Mn], mitochondrial (SODA).